We begin with the raw amino-acid sequence, 261 residues long: tRNA pseudouridine synthase A (261 aa).

Asp51 functions as the Nucleophile in the catalytic mechanism. Tyr109 is a substrate binding site.

This sequence belongs to the tRNA pseudouridine synthase TruA family. In terms of assembly, homodimer.

The catalysed reaction is uridine(38/39/40) in tRNA = pseudouridine(38/39/40) in tRNA. Functionally, formation of pseudouridine at positions 38, 39 and 40 in the anticodon stem and loop of transfer RNAs. The chain is tRNA pseudouridine synthase A from Shewanella denitrificans (strain OS217 / ATCC BAA-1090 / DSM 15013).